The sequence spans 252 residues: Hydroxyacylglutathione hydrolase (252 aa).

Positions 54, 56, 58, 59, 111, 130, and 170 each coordinate Zn(2+).

The protein belongs to the metallo-beta-lactamase superfamily. Glyoxalase II family. As to quaternary structure, monomer. It depends on Zn(2+) as a cofactor.

The enzyme catalyses an S-(2-hydroxyacyl)glutathione + H2O = a 2-hydroxy carboxylate + glutathione + H(+). It participates in secondary metabolite metabolism; methylglyoxal degradation; (R)-lactate from methylglyoxal: step 2/2. In terms of biological role, thiolesterase that catalyzes the hydrolysis of S-D-lactoyl-glutathione to form glutathione and D-lactic acid. The protein is Hydroxyacylglutathione hydrolase of Francisella tularensis subsp. novicida (strain U112).